The sequence spans 692 residues: A-type ATP synthase subunit I (692 aa).

Helical transmembrane passes span 389–409 (GIMLTDAVYGLLLTIIGLFIW), 422–442 (LGYILTLAGISTVIMGIITGG), 494–514 (ILVFSIFVGLIHLLIGLFVGF), 531–551 (GVWILLILSIFVGIGLMFAGA), 553–573 (TMIAGGIIGIFVVLAILASMY), 602–622 (ARLLALCLATGGLAMAVNIMA), and 624–644 (LVGESIPVIGIIVAIIILLVG).

This sequence belongs to the V-ATPase 116 kDa subunit family. In terms of assembly, the A-type ATPase is composed of subunits A(3), B(3), C, D, E(1 or 2), F, H(2), I and K(x).

The protein localises to the cell membrane. In terms of biological role, component of the A-type ATP synthase that produces ATP from ADP in the presence of a proton gradient across the membrane. This chain is A-type ATP synthase subunit I, found in Methanocaldococcus jannaschii (strain ATCC 43067 / DSM 2661 / JAL-1 / JCM 10045 / NBRC 100440) (Methanococcus jannaschii).